We begin with the raw amino-acid sequence, 412 residues long: Serine hydroxymethyltransferase (412 aa).

Residues Leu119 and 123 to 125 (GHL) contribute to the (6S)-5,6,7,8-tetrahydrofolate site. Residue Lys228 is modified to N6-(pyridoxal phosphate)lysine.

Belongs to the SHMT family. Homodimer. The cofactor is pyridoxal 5'-phosphate.

The protein resides in the cytoplasm. It catalyses the reaction (6R)-5,10-methylene-5,6,7,8-tetrahydrofolate + glycine + H2O = (6S)-5,6,7,8-tetrahydrofolate + L-serine. It functions in the pathway one-carbon metabolism; tetrahydrofolate interconversion. Its pathway is amino-acid biosynthesis; glycine biosynthesis; glycine from L-serine: step 1/1. Functionally, catalyzes the reversible interconversion of serine and glycine with tetrahydrofolate (THF) serving as the one-carbon carrier. This reaction serves as the major source of one-carbon groups required for the biosynthesis of purines, thymidylate, methionine, and other important biomolecules. Also exhibits THF-independent aldolase activity toward beta-hydroxyamino acids, producing glycine and aldehydes, via a retro-aldol mechanism. The chain is Serine hydroxymethyltransferase from Thermodesulfovibrio yellowstonii (strain ATCC 51303 / DSM 11347 / YP87).